The chain runs to 155 residues: Small ribosomal subunit protein uS7 (155 aa).

It belongs to the universal ribosomal protein uS7 family. In terms of assembly, part of the 30S ribosomal subunit. Contacts proteins S9 and S11.

Its function is as follows. One of the primary rRNA binding proteins, it binds directly to 16S rRNA where it nucleates assembly of the head domain of the 30S subunit. Is located at the subunit interface close to the decoding center, probably blocks exit of the E-site tRNA. This Helicobacter pylori (strain Shi470) protein is Small ribosomal subunit protein uS7.